Here is a 236-residue protein sequence, read N- to C-terminus: Small ribosomal subunit protein uS2c (236 aa).

The protein belongs to the universal ribosomal protein uS2 family.

It is found in the plastid. Its subcellular location is the chloroplast. In Ceratophyllum demersum (Rigid hornwort), this protein is Small ribosomal subunit protein uS2c (rps2).